The primary structure comprises 348 residues: Ferredoxin--NADP reductase (348 aa).

8 residues coordinate FAD: threonine 25, glutamate 44, glutamine 52, tyrosine 57, valine 97, phenylalanine 132, aspartate 298, and serine 339.

It belongs to the ferredoxin--NADP reductase type 2 family. In terms of assembly, homodimer. It depends on FAD as a cofactor.

It carries out the reaction 2 reduced [2Fe-2S]-[ferredoxin] + NADP(+) + H(+) = 2 oxidized [2Fe-2S]-[ferredoxin] + NADPH. The polypeptide is Ferredoxin--NADP reductase (Chlorobium phaeobacteroides (strain BS1)).